The following is a 263-amino-acid chain: Urease accessory protein UreH (263 aa).

This sequence belongs to the UreD family. UreH, UreF and UreG form a complex that acts as a GTP-hydrolysis-dependent molecular chaperone, activating the urease apoprotein by helping to assemble the nickel containing metallocenter of UreC. The UreE protein probably delivers the nickel.

It localises to the cytoplasm. In terms of biological role, required for maturation of urease via the functional incorporation of the urease nickel metallocenter. This is Urease accessory protein UreH from Helicobacter acinonychis (strain Sheeba).